We begin with the raw amino-acid sequence, 388 residues long: Probable tRNA sulfurtransferase (388 aa).

Positions 55-162 (VTLDDKLKKI…PEGVLIFTDR (108 aa)) constitute a THUMP domain. ATP is bound by residues 180–181 (LL), 205–206 (TF), Arg-264, Gly-286, and Gln-295.

The protein belongs to the ThiI family.

It localises to the cytoplasm. The enzyme catalyses [ThiI sulfur-carrier protein]-S-sulfanyl-L-cysteine + a uridine in tRNA + 2 reduced [2Fe-2S]-[ferredoxin] + ATP + H(+) = [ThiI sulfur-carrier protein]-L-cysteine + a 4-thiouridine in tRNA + 2 oxidized [2Fe-2S]-[ferredoxin] + AMP + diphosphate. It carries out the reaction [ThiS sulfur-carrier protein]-C-terminal Gly-Gly-AMP + S-sulfanyl-L-cysteinyl-[cysteine desulfurase] + AH2 = [ThiS sulfur-carrier protein]-C-terminal-Gly-aminoethanethioate + L-cysteinyl-[cysteine desulfurase] + A + AMP + 2 H(+). Its pathway is cofactor biosynthesis; thiamine diphosphate biosynthesis. Catalyzes the ATP-dependent transfer of a sulfur to tRNA to produce 4-thiouridine in position 8 of tRNAs, which functions as a near-UV photosensor. Also catalyzes the transfer of sulfur to the sulfur carrier protein ThiS, forming ThiS-thiocarboxylate. This is a step in the synthesis of thiazole, in the thiamine biosynthesis pathway. The sulfur is donated as persulfide by IscS. This Thermotoga maritima (strain ATCC 43589 / DSM 3109 / JCM 10099 / NBRC 100826 / MSB8) protein is Probable tRNA sulfurtransferase.